The chain runs to 999 residues: Probable basic-leucine zipper transcription factor N (999 aa).

Composition is skewed to low complexity over residues M1–Q79 and N88–N126. The tract at residues M1–N126 is disordered. 2 coiled-coil regions span residues Q148–M198 and G232–S282. A compositionally biased stretch (polar residues) spans E286 to L302. 3 disordered regions span residues E286–Q406, Q450–N533, and E601–Q620. Low complexity predominate over residues S303–N347. Residues M348–Q406 show a composition bias toward polar residues. Residues I423–Q451 are a coiled coil. A compositionally biased stretch (low complexity) spans Q450 to Q517. The region spanning E601–L664 is the bZIP domain. Residues K602 to R632 form a basic motif region. The segment at I636–L643 is leucine-zipper. Disordered regions lie at residues K665–T711, Q779–E807, and V870–T899. The span at S682–Q692 shows a compositional bias: acidic residues. Positions H921–L950 form a coiled coil.

Belongs to the bZIP family.

Its subcellular location is the nucleus. In terms of biological role, probable transcriptional regulator. The polypeptide is Probable basic-leucine zipper transcription factor N (bzpN) (Dictyostelium discoideum (Social amoeba)).